We begin with the raw amino-acid sequence, 244 residues long: MSLFTSFLLLCVLTAVYAETLTEGAQSSCPVIACSSPGLNGFPGKDGHDGAKGEKGEPGQGLRGLQGPPGKVGPAGPPGNPGSKGATGPKGDRGESVEFDTTNIDLEIAALRSELRAMRKWVLLSMSENVGKKYFMSSVRRMPLNRAKALCSELQGTVATPRNAEENRAIQNVAKDVAFLGITDQRTENVFEDLTGNRVRYTNWNEGEPNNVGSGENCVVLLTNGKWNDVPCSDSFLVVCEFSD.

A signal peptide spans 1–18 (MSLFTSFLLLCVLTAVYA). The 59-residue stretch at 38-96 (GLNGFPGKDGHDGAKGEKGEPGQGLRGLQGPPGKVGPAGPPGNPGSKGATGPKGDRGES) folds into the Collagen-like domain. Proline 43 is subject to 4-hydroxyproline. Residues 43-99 (PGKDGHDGAKGEKGEPGQGLRGLQGPPGKVGPAGPPGNPGSKGATGPKGDRGESVEF) are disordered. Residues 45 to 57 (KDGHDGAKGEKGE) are compositionally biased toward basic and acidic residues. 4-hydroxyproline occurs at positions 58, 69, 78, and 81. Residues 65 to 74 (LQGPPGKVGP) are compositionally biased toward low complexity. Residues 108-126 (IAALRSELRAMRKWVLLSM) adopt a coiled-coil conformation. Residues 129–241 (NVGKKYFMSS…CSDSFLVVCE (113 aa)) enclose the C-type lectin domain. Intrachain disulfides connect cysteine 151–cysteine 240 and cysteine 218–cysteine 232.

As to quaternary structure, oligomeric complex of 3 or more homotrimers. Interacts with MASP1 and MASP2. Interacts with MEP1A and MEP1B and may inhibit their catalytic activity.

The protein resides in the secreted. Functionally, calcium-dependent lectin involved in innate immune defense. Binds mannose, fucose and N-acetylglucosamine on different microorganisms and activates the lectin complement pathway. Binds to late apoptotic cells, as well as to apoptotic blebs and to necrotic cells, but not to early apoptotic cells, facilitating their uptake by macrophages. This is Mannose-binding protein C (Mbl2) from Rattus norvegicus (Rat).